The sequence spans 179 residues: Large ribosomal subunit protein uL6 (179 aa).

Belongs to the universal ribosomal protein uL6 family. As to quaternary structure, part of the 50S ribosomal subunit.

Its function is as follows. This protein binds to the 23S rRNA, and is important in its secondary structure. It is located near the subunit interface in the base of the L7/L12 stalk, and near the tRNA binding site of the peptidyltransferase center. The sequence is that of Large ribosomal subunit protein uL6 from Treponema pallidum (strain Nichols).